A 117-amino-acid chain; its full sequence is Hainantoxin-XV-4 (117 aa).

An N-terminal signal peptide occupies residues 1-20; sequence MKLCAVIIASLLVCVAVASS. Positions 20–55 are disordered; sequence SSDNQKEFAQEKEMTREETQSLGEHEKDDEVTGSEE. A propeptide spanning residues 21 to 56 is cleaved from the precursor; that stretch reads SDNQKEFAQEKEMTREETQSLGEHEKDDEVTGSEER. Residues 23 to 55 are compositionally biased toward basic and acidic residues; the sequence is NQKEFAQEKEMTREETQSLGEHEKDDEVTGSEE. Cystine bridges form between cysteine 58–cysteine 72, cysteine 65–cysteine 78, cysteine 69–cysteine 115, and cysteine 71–cysteine 91.

The protein belongs to the neurotoxin 03 (Tx2) family. 02 subfamily. HNTX-XV sub-subfamily. As to expression, expressed by the venom gland.

The protein localises to the secreted. Putative ion channel inhibitor. The sequence is that of Hainantoxin-XV-4 from Cyriopagopus hainanus (Chinese bird spider).